A 318-amino-acid polypeptide reads, in one-letter code: Methionyl-tRNA formyltransferase (318 aa).

111-114 (SLLP) contributes to the (6S)-5,6,7,8-tetrahydrofolate binding site.

The protein belongs to the Fmt family.

It carries out the reaction L-methionyl-tRNA(fMet) + (6R)-10-formyltetrahydrofolate = N-formyl-L-methionyl-tRNA(fMet) + (6S)-5,6,7,8-tetrahydrofolate + H(+). In terms of biological role, attaches a formyl group to the free amino group of methionyl-tRNA(fMet). The formyl group appears to play a dual role in the initiator identity of N-formylmethionyl-tRNA by promoting its recognition by IF2 and preventing the misappropriation of this tRNA by the elongation apparatus. The protein is Methionyl-tRNA formyltransferase of Chlorobium limicola (strain DSM 245 / NBRC 103803 / 6330).